The primary structure comprises 207 residues: Outer-membrane lipoprotein carrier protein (207 aa).

An N-terminal signal peptide occupies residues 1-22 (MKLSEKFCVFLFFLLFTSTTHA).

The protein belongs to the LolA family. In terms of assembly, monomer.

The protein resides in the periplasm. Participates in the translocation of lipoproteins from the inner membrane to the outer membrane. Only forms a complex with a lipoprotein if the residue after the N-terminal Cys is not an aspartate (The Asp acts as a targeting signal to indicate that the lipoprotein should stay in the inner membrane). The polypeptide is Outer-membrane lipoprotein carrier protein (Nitrosospira multiformis (strain ATCC 25196 / NCIMB 11849 / C 71)).